A 412-amino-acid polypeptide reads, in one-letter code: Tyrosine--tRNA ligase (412 aa).

Y41 is a binding site for L-tyrosine. A 'HIGH' region motif is present at residues 46–55 (ATADSLHVGH). L-tyrosine-binding residues include Y174 and Q178. Residues 234–238 (KMGKS) carry the 'KMSKS' region motif. Residue K237 participates in ATP binding. The S4 RNA-binding domain occupies 348–411 (LSLTDLLLEH…KKQHLHLRLE (64 aa)).

Belongs to the class-I aminoacyl-tRNA synthetase family. TyrS type 1 subfamily. In terms of assembly, homodimer.

It localises to the cytoplasm. It carries out the reaction tRNA(Tyr) + L-tyrosine + ATP = L-tyrosyl-tRNA(Tyr) + AMP + diphosphate + H(+). Catalyzes the attachment of tyrosine to tRNA(Tyr) in a two-step reaction: tyrosine is first activated by ATP to form Tyr-AMP and then transferred to the acceptor end of tRNA(Tyr). The chain is Tyrosine--tRNA ligase from Pseudomonas aeruginosa (strain LESB58).